A 61-amino-acid polypeptide reads, in one-letter code: Small ribosomal subunit protein uS14 (61 aa).

Zn(2+)-binding residues include C24, C27, C40, and C43.

The protein belongs to the universal ribosomal protein uS14 family. Zinc-binding uS14 subfamily. In terms of assembly, part of the 30S ribosomal subunit. Contacts proteins S3 and S10. Zn(2+) is required as a cofactor.

Binds 16S rRNA, required for the assembly of 30S particles and may also be responsible for determining the conformation of the 16S rRNA at the A site. The polypeptide is Small ribosomal subunit protein uS14 (Sulfurimonas denitrificans (strain ATCC 33889 / DSM 1251) (Thiomicrospira denitrificans (strain ATCC 33889 / DSM 1251))).